The chain runs to 151 residues: Small ribosomal subunit protein uS15 (151 aa).

This sequence belongs to the universal ribosomal protein uS15 family.

This Lumbricus rubellus (Humus earthworm) protein is Small ribosomal subunit protein uS15 (RPS13).